A 229-amino-acid polypeptide reads, in one-letter code: Probable septum site-determining protein MinC (229 aa).

The protein belongs to the MinC family. Interacts with MinD and FtsZ.

In terms of biological role, cell division inhibitor that blocks the formation of polar Z ring septums. Rapidly oscillates between the poles of the cell to destabilize FtsZ filaments that have formed before they mature into polar Z rings. Prevents FtsZ polymerization. This chain is Probable septum site-determining protein MinC, found in Ruminiclostridium cellulolyticum (strain ATCC 35319 / DSM 5812 / JCM 6584 / H10) (Clostridium cellulolyticum).